Reading from the N-terminus, the 229-residue chain is Ribonuclease 3 (229 aa).

The RNase III domain occupies L5 to D127. E40 is a Mg(2+) binding site. D44 is an active-site residue. Residues D113 and E116 each contribute to the Mg(2+) site. Residue E116 is part of the active site. Positions D154–V224 constitute a DRBM domain.

Belongs to the ribonuclease III family. Homodimer. It depends on Mg(2+) as a cofactor.

It localises to the cytoplasm. It catalyses the reaction Endonucleolytic cleavage to 5'-phosphomonoester.. In terms of biological role, digests double-stranded RNA. Involved in the processing of primary rRNA transcript to yield the immediate precursors to the large and small rRNAs (23S and 16S). Processes some mRNAs, and tRNAs when they are encoded in the rRNA operon. Processes pre-crRNA and tracrRNA of type II CRISPR loci if present in the organism. The chain is Ribonuclease 3 from Pseudomonas putida (strain W619).